The sequence spans 333 residues: Phosphate acyltransferase (333 aa).

This sequence belongs to the PlsX family. Homodimer. Probably interacts with PlsY.

Its subcellular location is the cytoplasm. The enzyme catalyses a fatty acyl-[ACP] + phosphate = an acyl phosphate + holo-[ACP]. It participates in lipid metabolism; phospholipid metabolism. Catalyzes the reversible formation of acyl-phosphate (acyl-PO(4)) from acyl-[acyl-carrier-protein] (acyl-ACP). This enzyme utilizes acyl-ACP as fatty acyl donor, but not acyl-CoA. The chain is Phosphate acyltransferase from Clostridium botulinum (strain Alaska E43 / Type E3).